We begin with the raw amino-acid sequence, 440 residues long: Ribulose bisphosphate carboxylase large chain (440 aa).

Lysine 4 carries the N6,N6,N6-trimethyllysine modification. Residues asparagine 113 and threonine 163 each coordinate substrate. The Proton acceptor role is filled by lysine 165. A substrate-binding site is contributed by lysine 167. Lysine 191, aspartate 193, and glutamate 194 together coordinate Mg(2+). An N6-carboxylysine modification is found at lysine 191. Histidine 284 functions as the Proton acceptor in the catalytic mechanism. Substrate-binding residues include arginine 285, histidine 317, and serine 369.

The protein belongs to the RuBisCO large chain family. Type I subfamily. In terms of assembly, heterohexadecamer of 8 large chains and 8 small chains; disulfide-linked. The disulfide link is formed within the large subunit homodimers. Requires Mg(2+) as cofactor. The disulfide bond which can form in the large chain dimeric partners within the hexadecamer appears to be associated with oxidative stress and protein turnover.

It is found in the plastid. The protein resides in the chloroplast. The enzyme catalyses 2 (2R)-3-phosphoglycerate + 2 H(+) = D-ribulose 1,5-bisphosphate + CO2 + H2O. It catalyses the reaction D-ribulose 1,5-bisphosphate + O2 = 2-phosphoglycolate + (2R)-3-phosphoglycerate + 2 H(+). In terms of biological role, ruBisCO catalyzes two reactions: the carboxylation of D-ribulose 1,5-bisphosphate, the primary event in carbon dioxide fixation, as well as the oxidative fragmentation of the pentose substrate in the photorespiration process. Both reactions occur simultaneously and in competition at the same active site. The chain is Ribulose bisphosphate carboxylase large chain from Pteris vittata (Chinese ladder brake).